We begin with the raw amino-acid sequence, 333 residues long: Fructose-1,6-bisphosphatase class 1 (333 aa).

Residues glutamate 92, aspartate 113, leucine 115, and aspartate 116 each coordinate Mg(2+). Substrate contacts are provided by residues 116–119 (DGSS), asparagine 209, tyrosine 242, and lysine 272. A Mg(2+)-binding site is contributed by glutamate 278.

The protein belongs to the FBPase class 1 family. In terms of assembly, homotetramer. Requires Mg(2+) as cofactor.

The protein localises to the cytoplasm. The catalysed reaction is beta-D-fructose 1,6-bisphosphate + H2O = beta-D-fructose 6-phosphate + phosphate. It participates in carbohydrate biosynthesis; Calvin cycle. The polypeptide is Fructose-1,6-bisphosphatase class 1 (Pelodictyon phaeoclathratiforme (strain DSM 5477 / BU-1)).